Consider the following 272-residue polypeptide: Type III pantothenate kinase (272 aa).

6-13 (DVRNTHTV) is a binding site for ATP. Residue 109 to 112 (GADR) participates in substrate binding. D111 functions as the Proton acceptor in the catalytic mechanism. D131 is a K(+) binding site. Position 134 (S134) interacts with ATP. Substrate is bound at residue T186.

This sequence belongs to the type III pantothenate kinase family. In terms of assembly, homodimer. It depends on NH4(+) as a cofactor. K(+) is required as a cofactor.

Its subcellular location is the cytoplasm. It catalyses the reaction (R)-pantothenate + ATP = (R)-4'-phosphopantothenate + ADP + H(+). Its pathway is cofactor biosynthesis; coenzyme A biosynthesis; CoA from (R)-pantothenate: step 1/5. Its function is as follows. Catalyzes the phosphorylation of pantothenate (Pan), the first step in CoA biosynthesis. The sequence is that of Type III pantothenate kinase from Mycobacterium marinum (strain ATCC BAA-535 / M).